The following is a 200-amino-acid chain: Holliday junction branch migration complex subunit RuvA (200 aa).

The tract at residues 1–64 is domain I; the sequence is MITSIQGTLV…EDSQTLYGFA (64 aa). A domain II region spans residues 65–144; the sequence is SPAERDFFRL…ATGAAPGLAT (80 aa). A flexible linker region spans residues 145 to 151; that stretch reads QPAAAAS. Positions 152–200 are domain III; the sequence is PGASAHRDAVAALVALGYRSADADEAVRRASLALGEAATTESLIKKALS.

Belongs to the RuvA family. As to quaternary structure, homotetramer. Forms an RuvA(8)-RuvB(12)-Holliday junction (HJ) complex. HJ DNA is sandwiched between 2 RuvA tetramers; dsDNA enters through RuvA and exits via RuvB. An RuvB hexamer assembles on each DNA strand where it exits the tetramer. Each RuvB hexamer is contacted by two RuvA subunits (via domain III) on 2 adjacent RuvB subunits; this complex drives branch migration. In the full resolvosome a probable DNA-RuvA(4)-RuvB(12)-RuvC(2) complex forms which resolves the HJ.

It localises to the cytoplasm. Its function is as follows. The RuvA-RuvB-RuvC complex processes Holliday junction (HJ) DNA during genetic recombination and DNA repair, while the RuvA-RuvB complex plays an important role in the rescue of blocked DNA replication forks via replication fork reversal (RFR). RuvA specifically binds to HJ cruciform DNA, conferring on it an open structure. The RuvB hexamer acts as an ATP-dependent pump, pulling dsDNA into and through the RuvAB complex. HJ branch migration allows RuvC to scan DNA until it finds its consensus sequence, where it cleaves and resolves the cruciform DNA. This is Holliday junction branch migration complex subunit RuvA from Opitutus terrae (strain DSM 11246 / JCM 15787 / PB90-1).